Consider the following 317-residue polypeptide: Tyrosine--tRNA ligase (317 aa).

L-tyrosine is bound at residue tyrosine 33. Positions 38-46 (PSGKIHMGH) match the 'HIGH' region motif. L-tyrosine contacts are provided by tyrosine 155, glutamine 159, aspartate 162, and glutamine 177. Positions 211–215 (KMASS) match the 'KMSKS' region motif. Serine 214 is a binding site for ATP.

It belongs to the class-I aminoacyl-tRNA synthetase family. TyrS type 3 subfamily. Homodimer.

The protein resides in the cytoplasm. The catalysed reaction is tRNA(Tyr) + L-tyrosine + ATP = L-tyrosyl-tRNA(Tyr) + AMP + diphosphate + H(+). In terms of biological role, catalyzes the attachment of tyrosine to tRNA(Tyr) in a two-step reaction: tyrosine is first activated by ATP to form Tyr-AMP and then transferred to the acceptor end of tRNA(Tyr). The chain is Tyrosine--tRNA ligase from Methanosarcina mazei (strain ATCC BAA-159 / DSM 3647 / Goe1 / Go1 / JCM 11833 / OCM 88) (Methanosarcina frisia).